Here is a 354-residue protein sequence, read N- to C-terminus: UDP-N-acetylglucosamine--N-acetylmuramyl-(pentapeptide) pyrophosphoryl-undecaprenol N-acetylglucosamine transferase (354 aa).

UDP-N-acetyl-alpha-D-glucosamine contacts are provided by residues 11 to 13, R164, S194, and Q289; that span reads TAG.

The protein belongs to the glycosyltransferase 28 family. MurG subfamily.

It localises to the cell membrane. It catalyses the reaction di-trans,octa-cis-undecaprenyl diphospho-N-acetyl-alpha-D-muramoyl-L-alanyl-D-glutamyl-meso-2,6-diaminopimeloyl-D-alanyl-D-alanine + UDP-N-acetyl-alpha-D-glucosamine = di-trans,octa-cis-undecaprenyl diphospho-[N-acetyl-alpha-D-glucosaminyl-(1-&gt;4)]-N-acetyl-alpha-D-muramoyl-L-alanyl-D-glutamyl-meso-2,6-diaminopimeloyl-D-alanyl-D-alanine + UDP + H(+). The protein operates within cell wall biogenesis; peptidoglycan biosynthesis. In terms of biological role, cell wall formation. Catalyzes the transfer of a GlcNAc subunit on undecaprenyl-pyrophosphoryl-MurNAc-pentapeptide (lipid intermediate I) to form undecaprenyl-pyrophosphoryl-MurNAc-(pentapeptide)GlcNAc (lipid intermediate II). The protein is UDP-N-acetylglucosamine--N-acetylmuramyl-(pentapeptide) pyrophosphoryl-undecaprenol N-acetylglucosamine transferase of Clostridium botulinum (strain Kyoto / Type A2).